The following is a 347-amino-acid chain: UPF0284 protein M1425_0030 (347 aa).

Belongs to the UPF0284 family.

The protein is UPF0284 protein M1425_0030 of Saccharolobus islandicus (strain M.14.25 / Kamchatka #1) (Sulfolobus islandicus).